A 36-amino-acid chain; its full sequence is Photosystem I reaction center subunit VIII (36 aa).

Residues 7–29 (PSILVPLVGLVFPAITLASLFIY) form a helical membrane-spanning segment.

Belongs to the PsaI family.

Its subcellular location is the plastid. The protein localises to the chloroplast thylakoid membrane. In terms of biological role, may help in the organization of the PsaL subunit. The polypeptide is Photosystem I reaction center subunit VIII (Anthoceros angustus (Hornwort)).